The following is a 463-amino-acid chain: O-phospho-L-seryl-tRNA:Cys-tRNA synthase 2 (463 aa).

Residues Ala154–Arg155, Asn259, and Ser282–His284 contribute to the pyridoxal 5'-phosphate site. The residue at position 285 (Lys285) is an N6-(pyridoxal phosphate)lysine.

It belongs to the SepCysS family. In terms of assembly, homodimer. Interacts with SepRS. The cofactor is pyridoxal 5'-phosphate.

The catalysed reaction is O-phospho-L-seryl-tRNA(Cys) + hydrogen sulfide + H(+) = L-cysteinyl-tRNA(Cys) + phosphate. In terms of biological role, converts O-phospho-L-seryl-tRNA(Cys) (Sep-tRNA(Cys)) to L-cysteinyl-tRNA(Cys) (Cys-tRNA(Cys)). The sequence is that of O-phospho-L-seryl-tRNA:Cys-tRNA synthase 2 from Methanocella arvoryzae (strain DSM 22066 / NBRC 105507 / MRE50).